A 550-amino-acid polypeptide reads, in one-letter code: Methionine--tRNA ligase (550 aa).

Positions 12-22 (PYANGPLHFGH) match the 'HIGH' region motif. Residues C144, C147, C157, and C160 each contribute to the Zn(2+) site. The 'KMSKS' region signature appears at 330–334 (QFSKS). K333 contacts ATP.

It belongs to the class-I aminoacyl-tRNA synthetase family. MetG type 1 subfamily. As to quaternary structure, monomer. The cofactor is Zn(2+).

It is found in the cytoplasm. It catalyses the reaction tRNA(Met) + L-methionine + ATP = L-methionyl-tRNA(Met) + AMP + diphosphate. Is required not only for elongation of protein synthesis but also for the initiation of all mRNA translation through initiator tRNA(fMet) aminoacylation. The polypeptide is Methionine--tRNA ligase (Chlamydia caviae (strain ATCC VR-813 / DSM 19441 / 03DC25 / GPIC) (Chlamydophila caviae)).